The chain runs to 288 residues: Co-chaperone protein DjlA (288 aa).

The Periplasmic segment spans residues M1–K6. Residues I7–S30 form a helical membrane-spanning segment. Residues I31–K288 lie on the Cytoplasmic side of the membrane. One can recognise a J domain in the interval D222–K288.

Homodimer.

It is found in the cell inner membrane. Its function is as follows. Regulatory DnaK co-chaperone. Direct interaction between DnaK and DjlA is needed for the induction of the wcaABCDE operon, involved in the synthesis of a colanic acid polysaccharide capsule, possibly through activation of the RcsB/RcsC phosphotransfer signaling pathway. The colanic acid capsule may help the bacterium survive conditions outside the host. This is Co-chaperone protein DjlA from Haemophilus influenzae (strain ATCC 51907 / DSM 11121 / KW20 / Rd).